Here is a 383-residue protein sequence, read N- to C-terminus: ATP phosphoribosyltransferase regulatory subunit (383 aa).

This sequence belongs to the class-II aminoacyl-tRNA synthetase family. HisZ subfamily. Heteromultimer composed of HisG and HisZ subunits.

It is found in the cytoplasm. Its pathway is amino-acid biosynthesis; L-histidine biosynthesis; L-histidine from 5-phospho-alpha-D-ribose 1-diphosphate: step 1/9. Required for the first step of histidine biosynthesis. May allow the feedback regulation of ATP phosphoribosyltransferase activity by histidine. The protein is ATP phosphoribosyltransferase regulatory subunit of Cupriavidus metallidurans (strain ATCC 43123 / DSM 2839 / NBRC 102507 / CH34) (Ralstonia metallidurans).